Reading from the N-terminus, the 279-residue chain is Acetyl-coenzyme A carboxylase carboxyl transferase subunit beta (279 aa).

A CoA carboxyltransferase N-terminal domain is found at 23–279; the sequence is LWWKCEECGA…IVRLAGMLKV (257 aa). Zn(2+)-binding residues include Cys-27, Cys-30, Cys-46, and Cys-49. The C4-type zinc finger occupies 27–49; it reads CEECGAMIHKKQLEDHVYTCSDC.

It belongs to the AccD/PCCB family. Acetyl-CoA carboxylase is a heterohexamer composed of biotin carboxyl carrier protein (AccB), biotin carboxylase (AccC) and two subunits each of ACCase subunit alpha (AccA) and ACCase subunit beta (AccD). The cofactor is Zn(2+).

Its subcellular location is the cytoplasm. It catalyses the reaction N(6)-carboxybiotinyl-L-lysyl-[protein] + acetyl-CoA = N(6)-biotinyl-L-lysyl-[protein] + malonyl-CoA. Its pathway is lipid metabolism; malonyl-CoA biosynthesis; malonyl-CoA from acetyl-CoA: step 1/1. Functionally, component of the acetyl coenzyme A carboxylase (ACC) complex. Biotin carboxylase (BC) catalyzes the carboxylation of biotin on its carrier protein (BCCP) and then the CO(2) group is transferred by the transcarboxylase to acetyl-CoA to form malonyl-CoA. The polypeptide is Acetyl-coenzyme A carboxylase carboxyl transferase subunit beta (Chlorobium limicola (strain DSM 245 / NBRC 103803 / 6330)).